A 116-amino-acid polypeptide reads, in one-letter code: Cation channel sperm-associated auxiliary subunit TMEM262 (116 aa).

At 1–16 (MRWRDRIAVLCFPPGL) the chain is on the cytoplasmic side. Residues 17–38 (MLTVAALILFFIHMGVFASDVH) traverse the membrane as a helical segment. At 39–51 (NFCVIHNYDHMSF) the chain is on the extracellular side. Residues 52–72 (RYTVVLIFSQVISIGWAAMGS) traverse the membrane as a helical segment. The Cytoplasmic segment spans residues 73 to 84 (LYAEMTGDKFLR). Residues 85–107 (CFALTILILNGAMFFNRLCLEFL) traverse the membrane as a helical segment. Residues 108 to 116 (AINYREERH) lie on the Extracellular side of the membrane.

Component of the CatSper complex or CatSpermasome composed of the core pore-forming members CATSPER1, CATSPER2, CATSPER3 and CATSPER4 as well as auxiliary members CATSPERB, CATSPERG, CATSPERD, CATSPERE, CATSPERZ, C2CD6/CATSPERT, SLCO6C1, TMEM249, TMEM262 and EFCAB9. HSPA1 may be an additional auxiliary complex member. The core complex members CATSPER1, CATSPER2, CATSPER3 and CATSPER4 form a heterotetrameric channel. The auxiliary CATSPERB, CATSPERG2, CATSPERD and CATSPERE subunits form a pavilion-like structure over the pore which stabilizes the complex through interactions with CATSPER4, CATSPER3, CATSPER1 and CATSPER2 respectively. SLCO6C1 interacts with CATSPERE and TMEM262/CATSPERH interacts with CATSPERB, further stabilizing the complex. C2CD6/CATSPERT interacts at least with CATSPERD and is required for targeting the CatSper complex in the flagellar membrane.

The protein localises to the cell projection. It is found in the cilium. It localises to the flagellum membrane. Functionally, auxiliary component of the CatSper complex, a complex involved in sperm cell hyperactivation. The chain is Cation channel sperm-associated auxiliary subunit TMEM262 from Mus musculus (Mouse).